The primary structure comprises 623 residues: F-box protein FBX14 (623 aa).

A disordered region spans residues 18–48 (LNLNPPCSSSSSSSSAATFTNKSRNFKSSPP). Over residues 33–45 (AATFTNKSRNFKS) the composition is skewed to polar residues. One can recognise an F-box domain in the interval 54–97 (VLENVLENVLQFLTSRCDRNAVSLVCRSWYRVEAQTRLEVFIGN). Residue lysine 119 participates in 1D-myo-inositol hexakisphosphate binding. An interaction with auxin-responsive proteins region spans residues 126–127 (DF). 1D-myo-inositol hexakisphosphate-binding positions include 158-159 (KR) and arginine 391. The tract at residues 394-399 (PFDPRE) is interaction with auxin-responsive proteins. Residue 447–449 (VFR) coordinates 1D-myo-inositol hexakisphosphate. The tract at residues 451-455 (CIMGR) is interaction with auxin-responsive proteins. Residue arginine 482 participates in 1D-myo-inositol hexakisphosphate binding. An interaction with auxin-responsive proteins region spans residues 510–511 (AF). 1D-myo-inositol hexakisphosphate-binding positions include 530–531 (QK) and arginine 555.

Part of a SCF (SKP1-cullin-F-box) protein ligase complex. May interact with auxin and auxin-responsive proteins.

Its subcellular location is the nucleus. It functions in the pathway protein modification; protein ubiquitination. This chain is F-box protein FBX14 (FBX14), found in Arabidopsis thaliana (Mouse-ear cress).